The primary structure comprises 283 residues: Pantothenate synthetase (283 aa).

30 to 37 (MGYLHEGH) provides a ligand contact to ATP. The Proton donor role is filled by His37. Residue Gln61 participates in (R)-pantoate binding. Gln61 lines the beta-alanine pocket. Residue 147-150 (GLKD) coordinates ATP. Gln153 contributes to the (R)-pantoate binding site. Residues Val176 and 184–187 (KSSR) contribute to the ATP site.

This sequence belongs to the pantothenate synthetase family. Homodimer.

The protein resides in the cytoplasm. The catalysed reaction is (R)-pantoate + beta-alanine + ATP = (R)-pantothenate + AMP + diphosphate + H(+). Its pathway is cofactor biosynthesis; (R)-pantothenate biosynthesis; (R)-pantothenate from (R)-pantoate and beta-alanine: step 1/1. Catalyzes the condensation of pantoate with beta-alanine in an ATP-dependent reaction via a pantoyl-adenylate intermediate. This is Pantothenate synthetase from Halalkalibacterium halodurans (strain ATCC BAA-125 / DSM 18197 / FERM 7344 / JCM 9153 / C-125) (Bacillus halodurans).